The following is a 330-amino-acid chain: Embigin (330 aa).

The signal sequence occupies residues 1–33; it reads MRSHTGLRALVAPGYPLLLLCLLAATRPDPAEG. The Extracellular segment spans residues 34–254; the sequence is DPTDPTFTSL…QLGESEEQNE (221 aa). Ig-like V-type domains are found at residues 38-161 and 162-256; these read PTFT…IHVP and KAHG…NELV. 9 N-linked (GlcNAc...) asparagine glycosylation sites follow: Asn55, Asn62, Asn70, Asn101, Asn118, Asn191, Asn198, Asn216, and Asn221. Cystine bridges form between Cys89-Cys145 and Cys182-Cys240. The helical transmembrane segment at 255–283 threads the bilayer; it reads LVVLSFLVPLKPFLAILAEVILLVAIILL. Over 284 to 330 the chain is Cytoplasmic; that stretch reads CEVYTHKKKNDPDAGKEFEQIEQLKSDDSNGIENNVPRYRKTDSADQ. A compositionally biased stretch (basic and acidic residues) spans 293–311; the sequence is NDPDAGKEFEQIEQLKSDD. A disordered region spans residues 293–330; the sequence is NDPDAGKEFEQIEQLKSDDSNGIENNVPRYRKTDSADQ. Ser312 carries the post-translational modification Phosphoserine.

As to quaternary structure, interacts with SLC16A1, SLC16A6 and SLC16A7. As to expression, only member of the immunoglobulin superfamily to be expressed in embryonal carcinoma cells, which resemble multipotential cells of early embryos.

The protein resides in the cell membrane. It localises to the synapse. Functionally, plays a role in targeting the monocarboxylate transporters SLC16A1, SLC16A6 and SLC16A7 to the cell membrane. Plays a role in the outgrowth of motoneurons and in the formation of neuromuscular junctions. Following muscle denervation, promotes nerve terminal sprouting and the formation of additional acetylcholine receptor clusters at synaptic sites without affecting terminal Schwann cell number or morphology. Delays the retraction of terminal sprouts following re-innervation of denervated endplates. In Mus musculus (Mouse), this protein is Embigin (Emb).